We begin with the raw amino-acid sequence, 82 residues long: RNA-binding protein Hfq (82 aa).

The 61-residue stretch at 11 to 71 (DTFLNHVRKT…ISTIMPGAPI (61 aa)) folds into the Sm domain.

It belongs to the Hfq family. As to quaternary structure, homohexamer.

RNA chaperone that binds small regulatory RNA (sRNAs) and mRNAs to facilitate mRNA translational regulation in response to envelope stress, environmental stress and changes in metabolite concentrations. Also binds with high specificity to tRNAs. In Bradyrhizobium sp. (strain BTAi1 / ATCC BAA-1182), this protein is RNA-binding protein Hfq.